Consider the following 294-residue polypeptide: 4-diphosphocytidyl-2-C-methyl-D-erythritol kinase (294 aa).

K15 is a catalytic residue. 101–111 (PSEAGLGGGSS) serves as a coordination point for ATP. Residue D143 is part of the active site.

Belongs to the GHMP kinase family. IspE subfamily.

It catalyses the reaction 4-CDP-2-C-methyl-D-erythritol + ATP = 4-CDP-2-C-methyl-D-erythritol 2-phosphate + ADP + H(+). It functions in the pathway isoprenoid biosynthesis; isopentenyl diphosphate biosynthesis via DXP pathway; isopentenyl diphosphate from 1-deoxy-D-xylulose 5-phosphate: step 3/6. Catalyzes the phosphorylation of the position 2 hydroxy group of 4-diphosphocytidyl-2C-methyl-D-erythritol. This is 4-diphosphocytidyl-2-C-methyl-D-erythritol kinase from Fusobacterium nucleatum subsp. nucleatum (strain ATCC 25586 / DSM 15643 / BCRC 10681 / CIP 101130 / JCM 8532 / KCTC 2640 / LMG 13131 / VPI 4355).